Reading from the N-terminus, the 215-residue chain is NADH-quinone oxidoreductase subunit C (215 aa).

Belongs to the complex I 30 kDa subunit family. As to quaternary structure, NDH-1 is composed of 14 different subunits. Subunits NuoB, C, D, E, F, and G constitute the peripheral sector of the complex.

The protein localises to the cell inner membrane. It catalyses the reaction a quinone + NADH + 5 H(+)(in) = a quinol + NAD(+) + 4 H(+)(out). NDH-1 shuttles electrons from NADH, via FMN and iron-sulfur (Fe-S) centers, to quinones in the respiratory chain. The immediate electron acceptor for the enzyme in this species is believed to be ubiquinone. Couples the redox reaction to proton translocation (for every two electrons transferred, four hydrogen ions are translocated across the cytoplasmic membrane), and thus conserves the redox energy in a proton gradient. In Dinoroseobacter shibae (strain DSM 16493 / NCIMB 14021 / DFL 12), this protein is NADH-quinone oxidoreductase subunit C.